Here is a 199-residue protein sequence, read N- to C-terminus: Small ribosomal subunit protein uS4 (199 aa).

An S4 RNA-binding domain is found at 94 to 157; sequence SRLDNLVYRA…RKLKLVQEAL (64 aa).

Belongs to the universal ribosomal protein uS4 family. Part of the 30S ribosomal subunit. Contacts protein S5. The interaction surface between S4 and S5 is involved in control of translational fidelity.

In terms of biological role, one of the primary rRNA binding proteins, it binds directly to 16S rRNA where it nucleates assembly of the body of the 30S subunit. Its function is as follows. With S5 and S12 plays an important role in translational accuracy. The chain is Small ribosomal subunit protein uS4 from Mycoplasmopsis synoviae (strain 53) (Mycoplasma synoviae).